Reading from the N-terminus, the 354-residue chain is RNA 3'-terminal phosphate cyclase (354 aa).

ATP-binding positions include Q100 and H290–D293. Catalysis depends on H316, which acts as the Tele-AMP-histidine intermediate.

This sequence belongs to the RNA 3'-terminal cyclase family. Type 1 subfamily.

Its subcellular location is the cytoplasm. It carries out the reaction a 3'-end 3'-phospho-ribonucleotide-RNA + ATP = a 3'-end 2',3'-cyclophospho-ribonucleotide-RNA + AMP + diphosphate. Functionally, catalyzes the conversion of 3'-phosphate to a 2',3'-cyclic phosphodiester at the end of RNA. The mechanism of action of the enzyme occurs in 3 steps: (A) adenylation of the enzyme by ATP; (B) transfer of adenylate to an RNA-N3'P to produce RNA-N3'PP5'A; (C) and attack of the adjacent 2'-hydroxyl on the 3'-phosphorus in the diester linkage to produce the cyclic end product. The biological role of this enzyme is unknown but it is likely to function in some aspects of cellular RNA processing. This is RNA 3'-terminal phosphate cyclase from Caldivirga maquilingensis (strain ATCC 700844 / DSM 13496 / JCM 10307 / IC-167).